The sequence spans 149 residues: Large ribosomal subunit protein eL24B (149 aa).

The residue at position 50 (serine 50) is a Phosphoserine. Positions 96 to 149 (QRPEVRAAARAAALKQRKDKRAASESEKKAIKAKSAASSARGQAIKNAKVAARR) are disordered. A compositionally biased stretch (basic and acidic residues) spans 116 to 125 (RAASESEKKA).

This sequence belongs to the eukaryotic ribosomal protein eL24 family. Component of the large ribosomal subunit (LSU). Mature yeast ribosomes consist of a small (40S) and a large (60S) subunit. The 40S small subunit contains 1 molecule of ribosomal RNA (18S rRNA) and at least 33 different proteins. The large 60S subunit contains 3 rRNA molecules (25S, 5.8S and 5S rRNA) and at least 46 different proteins.

It localises to the cytoplasm. Component of the ribosome, a large ribonucleoprotein complex responsible for the synthesis of proteins in the cell. The small ribosomal subunit (SSU) binds messenger RNAs (mRNAs) and translates the encoded message by selecting cognate aminoacyl-transfer RNA (tRNA) molecules. The large subunit (LSU) contains the ribosomal catalytic site termed the peptidyl transferase center (PTC), which catalyzes the formation of peptide bonds, thereby polymerizing the amino acids delivered by tRNAs into a polypeptide chain. The nascent polypeptides leave the ribosome through a tunnel in the LSU and interact with protein factors that function in enzymatic processing, targeting, and the membrane insertion of nascent chains at the exit of the ribosomal tunnel. In Schizosaccharomyces pombe (strain 972 / ATCC 24843) (Fission yeast), this protein is Large ribosomal subunit protein eL24B (rpl2402).